A 677-amino-acid chain; its full sequence is Methionine--tRNA ligase (677 aa).

A 'HIGH' region motif is present at residues 15 to 25 (PYANGSIHLGH). Zn(2+)-binding residues include cysteine 146, cysteine 149, cysteine 159, and cysteine 162. Residues 333–337 (KMSKS) carry the 'KMSKS' region motif. Lysine 336 contributes to the ATP binding site. The tRNA-binding domain maps to 575–677 (DFAKIDLRVA…DGAKPGQQVK (103 aa)).

It belongs to the class-I aminoacyl-tRNA synthetase family. MetG type 1 subfamily. In terms of assembly, homodimer. Zn(2+) is required as a cofactor.

It is found in the cytoplasm. The enzyme catalyses tRNA(Met) + L-methionine + ATP = L-methionyl-tRNA(Met) + AMP + diphosphate. In terms of biological role, is required not only for elongation of protein synthesis but also for the initiation of all mRNA translation through initiator tRNA(fMet) aminoacylation. In Salmonella paratyphi C (strain RKS4594), this protein is Methionine--tRNA ligase.